Consider the following 616-residue polypeptide: Chaperone protein HscA (616 aa).

The protein belongs to the heat shock protein 70 family.

Its function is as follows. Chaperone involved in the maturation of iron-sulfur cluster-containing proteins. Has a low intrinsic ATPase activity which is markedly stimulated by HscB. Involved in the maturation of IscU. The chain is Chaperone protein HscA from Salmonella paratyphi A (strain ATCC 9150 / SARB42).